The sequence spans 318 residues: NADH-ubiquinone oxidoreductase chain 1 (318 aa).

A run of 8 helical transmembrane segments spans residues 2–22, 70–90, 100–120, 147–167, 171–191, 223–243, 253–273, and 294–314; these read FFINIISLIIPILLAVAFLTL, MFILAPILALSLALTMWIPLP, LGVLFMLAMSSLAVYSILWSG, AIILLSVLLMNGSFTLSTLII, HMWLIFPAWPLAMMWFISTLA, FFLAEYANIIMMNILTTILFF, ELYSINFTMKTLLLTICFLWI, and LPLTLALCMWHVALPIITASI.

Belongs to the complex I subunit 1 family. As to quaternary structure, core subunit of respiratory chain NADH dehydrogenase (Complex I) which is composed of 45 different subunits.

Its subcellular location is the mitochondrion inner membrane. The enzyme catalyses a ubiquinone + NADH + 5 H(+)(in) = a ubiquinol + NAD(+) + 4 H(+)(out). Functionally, core subunit of the mitochondrial membrane respiratory chain NADH dehydrogenase (Complex I) which catalyzes electron transfer from NADH through the respiratory chain, using ubiquinone as an electron acceptor. Essential for the catalytic activity and assembly of complex I. This Canis lupus familiaris (Dog) protein is NADH-ubiquinone oxidoreductase chain 1 (MT-ND1).